Reading from the N-terminus, the 251-residue chain is GTP cyclohydrolase 1 type 2 homolog (251 aa).

Residues histidine 63, histidine 64, aspartate 101, histidine 219, and glutamate 223 each coordinate a divalent metal cation.

This sequence belongs to the GTP cyclohydrolase I type 2/NIF3 family. In terms of assembly, toroid-shaped homohexamer. In the hexamer, 3 dimers assemble to form a ring-like structure surrounding a central hole.

This is GTP cyclohydrolase 1 type 2 homolog from Haemophilus influenzae (strain ATCC 51907 / DSM 11121 / KW20 / Rd).